Consider the following 366-residue polypeptide: Septin-1 (366 aa).

In terms of domain architecture, Septin-type G spans 22 to 295 (KGFDFTLMVA…EGYRARCLQS (274 aa)). The interval 32–39 (GESGLGKS) is G1 motif. GTP contacts are provided by residues 32 to 39 (GESGLGKS), Thr-66, Gly-92, and 171 to 179 (KADALMPRE). The interval 89-92 (DTPG) is G3 motif. Positions 170 to 173 (GKAD) are G4 motif. Ser-206 carries the post-translational modification Phosphoserine. Residues Gly-229 and Arg-244 each contribute to the GTP site. Ser-247 is subject to Phosphoserine. Thr-250 bears the Phosphothreonine mark. Ser-306 and Ser-314 each carry phosphoserine; by AURKB. The segment at 347 to 366 (EKMQAQMQQSQAQGEQSDVL) is disordered. Residues 349-366 (MQAQMQQSQAQGEQSDVL) show a composition bias toward low complexity.

Belongs to the TRAFAC class TrmE-Era-EngA-EngB-Septin-like GTPase superfamily. Septin GTPase family. In terms of assembly, septins polymerize into heterooligomeric protein complexes that form filaments, and can associate with cellular membranes, actin filaments and microtubules. GTPase activity is required for filament formation. Interacts with AURKB.

Its subcellular location is the cytoplasm. The protein localises to the cytoskeleton. It is found in the microtubule organizing center. The protein resides in the centrosome. It localises to the midbody. Functionally, filament-forming cytoskeletal GTPase. May play a role in cytokinesis (Potential). This is Septin-1 from Mus musculus (Mouse).